The chain runs to 211 residues: Small ribosomal subunit protein uS3 (211 aa).

In terms of domain architecture, KH type-2 spans 38–106 (LRSFVKKTFH…EVELHIVEVK (69 aa)).

It belongs to the universal ribosomal protein uS3 family. In terms of assembly, part of the 30S ribosomal subunit. Forms a tight complex with proteins S10 and S14.

Binds the lower part of the 30S subunit head. Binds mRNA in the 70S ribosome, positioning it for translation. In Anaplasma phagocytophilum (strain HZ), this protein is Small ribosomal subunit protein uS3.